The primary structure comprises 395 residues: Putative pyridoxal phosphate-dependent acyltransferase (395 aa).

110-111 (GF) serves as a coordination point for pyridoxal 5'-phosphate. His135 serves as a coordination point for substrate. Pyridoxal 5'-phosphate is bound by residues Ser185, 210–213 (DDAH), and 240–243 (TLSK). The residue at position 243 (Lys243) is an N6-(pyridoxal phosphate)lysine. Substrate is bound at residue Thr357.

Belongs to the class-II pyridoxal-phosphate-dependent aminotransferase family. As to quaternary structure, homodimer. Pyridoxal 5'-phosphate serves as cofactor.

The protein is Putative pyridoxal phosphate-dependent acyltransferase of Staphylococcus aureus (strain Mu50 / ATCC 700699).